A 427-amino-acid chain; its full sequence is tRNA(Ile)-lysidine synthase (427 aa).

25–30 contacts ATP; the sequence is SGGLDS.

Belongs to the tRNA(Ile)-lysidine synthase family.

The protein resides in the cytoplasm. It carries out the reaction cytidine(34) in tRNA(Ile2) + L-lysine + ATP = lysidine(34) in tRNA(Ile2) + AMP + diphosphate + H(+). Functionally, ligates lysine onto the cytidine present at position 34 of the AUA codon-specific tRNA(Ile) that contains the anticodon CAU, in an ATP-dependent manner. Cytidine is converted to lysidine, thus changing the amino acid specificity of the tRNA from methionine to isoleucine. This Histophilus somni (strain 129Pt) (Haemophilus somnus) protein is tRNA(Ile)-lysidine synthase.